The chain runs to 884 residues: Protein argonaute-4 (884 aa).

The 120-residue stretch at proline 242–alanine 361 folds into the PAZ domain. The Piwi domain occupies leucine 532 to valine 843. The tract at residues aspartate 848 to alanine 870 is disordered.

This sequence belongs to the argonaute family. Ago subfamily.

The protein resides in the cytoplasm. It is found in the P-body. Its function is as follows. Required for RNA-mediated gene silencing (RNAi). Binds to short RNAs such as microRNAs (miRNAs) and represses the translation of mRNAs which are complementary to them. Lacks endonuclease activity and does not appear to cleave target mRNAs. The protein is Protein argonaute-4 (ago4) of Xenopus laevis (African clawed frog).